The primary structure comprises 327 residues: Movement protein (327 aa).

Positions 297-327 (SASSSNTENELARVSQNIDLLKNKLKEICGE) form a coiled coil.

Belongs to the caulimoviridae movement protein family. In terms of assembly, homotrimer, through the coiled-coil domain. Interacts with VAP. May interact (via N-terminus) with host prenylated Rab acceptor protein 1D (PRA1D).

Its subcellular location is the host cell junction. It is found in the host plasmodesma. Transports viral genome to neighboring plant cells directly through plasmosdesmata, without any budding. The movement protein allows efficient cell to cell propagation, by bypassing the host cell wall barrier. Acts by forming tubules structures that increase the size exclusion limit (SEL) of plasmodesmata, thereby allowing viral ribonucleocapsids to spread directly to neighboring cells. This chain is Movement protein, found in Arabidopsis thaliana (Mouse-ear cress).